We begin with the raw amino-acid sequence, 261 residues long: Thiazole synthase (261 aa).

Lys-95 (schiff-base intermediate with DXP) is an active-site residue. 1-deoxy-D-xylulose 5-phosphate contacts are provided by residues Gly-156, 182–183 (AG), and 204–205 (NT).

The protein belongs to the ThiG family. Homotetramer. Forms heterodimers with either ThiH or ThiS.

The protein localises to the cytoplasm. It carries out the reaction [ThiS sulfur-carrier protein]-C-terminal-Gly-aminoethanethioate + 2-iminoacetate + 1-deoxy-D-xylulose 5-phosphate = [ThiS sulfur-carrier protein]-C-terminal Gly-Gly + 2-[(2R,5Z)-2-carboxy-4-methylthiazol-5(2H)-ylidene]ethyl phosphate + 2 H2O + H(+). The protein operates within cofactor biosynthesis; thiamine diphosphate biosynthesis. Functionally, catalyzes the rearrangement of 1-deoxy-D-xylulose 5-phosphate (DXP) to produce the thiazole phosphate moiety of thiamine. Sulfur is provided by the thiocarboxylate moiety of the carrier protein ThiS. In vitro, sulfur can be provided by H(2)S. The sequence is that of Thiazole synthase from Pectobacterium atrosepticum (strain SCRI 1043 / ATCC BAA-672) (Erwinia carotovora subsp. atroseptica).